The sequence spans 636 residues: Nucleolin 2 (636 aa).

3 disordered regions span residues 1–386, 458–481, and 544–636; these read MGKS…SKTL, ANER…SRTI, and SEIG…NDEE. 2 stretches are compositionally biased toward basic and acidic residues: residues 43 to 63 and 76 to 89; these read KELI…KKVE and EKTK…KDES. Positions 90-103 are enriched in acidic residues; the sequence is SSEEEDDSSSDEEI. Residues 104-118 are compositionally biased toward basic and acidic residues; it reads APAKKRPEPIKKAKV. Acidic residues-rich tracts occupy residues 122–133, 152–163, and 182–193; these read SSDDDSTSDEET and SSDDDSSSDEET. Basic and acidic residues predominate over residues 224-238; sequence TPAKKEPIVVKKDSS. Composition is skewed to acidic residues over residues 267–278, 299–311, and 331–341; these read SSEEESSSDDEP, SSEE…ESDD, and SSDESSDESDK. Residues 342 to 367 are compositionally biased toward basic and acidic residues; it reads EESKDEKVTPKKKDSDVEMVDAEQKS. The span at 368–383 shows a compositional bias: polar residues; it reads NAKQPKTPTNQTQGGS. RRM domains follow at residues 384–460 and 479–558; these read KTLF…LANE and RTIY…ESRP. Residues 464–481 are compositionally biased toward polar residues; sequence PRNSNPGRKGEGSQSRTI. 2 stretches are compositionally biased toward basic and acidic residues: residues 552-566 and 579-604; these read HVEE…EGRS and RHSD…DRGA. Residues 622-636 are compositionally biased toward polar residues; that stretch reads MESSKGTKTVFNDEE.

In terms of assembly, interacts with THAL in the nucleus. As to expression, expressed at low levels in flower buds.

It localises to the nucleus. The protein resides in the nucleolus. In terms of biological role, involved in pre-rRNA processing and ribosome assembly. In Arabidopsis thaliana (Mouse-ear cress), this protein is Nucleolin 2.